Reading from the N-terminus, the 121-residue chain is Large ribosomal subunit protein bL19 (121 aa).

The protein belongs to the bacterial ribosomal protein bL19 family.

Its function is as follows. This protein is located at the 30S-50S ribosomal subunit interface and may play a role in the structure and function of the aminoacyl-tRNA binding site. This chain is Large ribosomal subunit protein bL19, found in Mesomycoplasma hyopneumoniae (strain 232) (Mycoplasma hyopneumoniae).